The chain runs to 181 residues: ATP synthase subunit delta (181 aa).

The protein belongs to the ATPase delta chain family. In terms of assembly, F-type ATPases have 2 components, F(1) - the catalytic core - and F(0) - the membrane proton channel. F(1) has five subunits: alpha(3), beta(3), gamma(1), delta(1), epsilon(1). F(0) has three main subunits: a(1), b(2) and c(10-14). The alpha and beta chains form an alternating ring which encloses part of the gamma chain. F(1) is attached to F(0) by a central stalk formed by the gamma and epsilon chains, while a peripheral stalk is formed by the delta and b chains.

The protein resides in the cell inner membrane. F(1)F(0) ATP synthase produces ATP from ADP in the presence of a proton or sodium gradient. F-type ATPases consist of two structural domains, F(1) containing the extramembraneous catalytic core and F(0) containing the membrane proton channel, linked together by a central stalk and a peripheral stalk. During catalysis, ATP synthesis in the catalytic domain of F(1) is coupled via a rotary mechanism of the central stalk subunits to proton translocation. Functionally, this protein is part of the stalk that links CF(0) to CF(1). It either transmits conformational changes from CF(0) to CF(1) or is implicated in proton conduction. The protein is ATP synthase subunit delta of Cupriavidus taiwanensis (strain DSM 17343 / BCRC 17206 / CCUG 44338 / CIP 107171 / LMG 19424 / R1) (Ralstonia taiwanensis (strain LMG 19424)).